Consider the following 764-residue polypeptide: Complement factor B (764 aa).

Residues 1-25 form the signal peptide; it reads MGSNLSPQLCLMPFILGLLSGGVTT. Sushi domains are found at residues 35-100, 101-160, and 163-220; these read GSCS…ECRA, IHCP…ICDN, and GYCS…SCQD. Intrachain disulfides connect Cys37–Cys76, Cys62–Cys98, Cys103–Cys145, Cys131–Cys158, Cys165–Cys205, and Cys191–Cys218. Residues Asn122 and Asn142 are each glycosylated (N-linked (GlcNAc...) asparagine). Residues 270 to 469 form the VWFA domain; that stretch reads NIYLVLDGSD…NLEDVFYQMI (200 aa). Mg(2+) is bound by residues Ser278 and Ser280. 2 residues coordinate Mn(2+): Ser278 and Ser280. A glycan (N-linked (GlcNAc...) asparagine) is linked at Asn285. A glycan (N-linked (Glc) (glycation) lysine) is linked at Lys291. Residue Thr353 coordinates Mg(2+). A Mn(2+)-binding site is contributed by Thr353. Residue Asn378 is glycosylated (N-linked (GlcNAc...) asparagine). In terms of domain architecture, Peptidase S1 spans 477–757; it reads LCGMVWEHRK…VLPWLKEKLQ (281 aa). 5 disulfide bridges follow: Cys478-Cys596, Cys511-Cys527, Cys599-Cys615, Cys656-Cys682, and Cys695-Cys725. Residues His526 and Asp576 each act as charge relay system in the active site. Ser699 acts as the Charge relay system in catalysis.

The protein belongs to the peptidase S1 family. As to quaternary structure, monomer. Interacts with complement C3b; this interaction is dependent on the presence of Mg(2+). Catalytic component of the C3 convertase of the alternative complement pathway, also named C3bBb, composed of complement factor B Bb and complement C3b. Catalytic component of the C5 convertase of the alternative complement pathway, also named C3bBb3b, composed of complement factor B Bb and additional molecules of complement C3b. Interacts to CFP; this interaction contributes to the stabilization of the active C3-convertase enzyme complex. The cofactor is Mg(2+). It depends on Mn(2+) as a cofactor. Cleaved by CFD following activation of the alternative complement system, generating Ba and Bb chains. Cleavage and activation takes place when CFB is already associated with complement C3b.

It is found in the secreted. It localises to the cell surface. The catalysed reaction is Cleavage of Arg-|-Ser bond in complement component C3 alpha-chain to yield C3a and C3b, and Arg-|-Xaa bond in complement component C5 alpha-chain to yield C5a and C5b.. Functionally, precursor of the catalytic component of the C3 and C5 convertase complexes of the alternative pathway of the complement system, a cascade of proteins that leads to phagocytosis and breakdown of pathogens and signaling that strengthens the adaptive immune system. The alternative complement pathway acts as an amplification loop that enhances other complement pathways (classical, lectin and GZMK) by promoting formation of additional C3 and C5 convertases. CFB is cleaved and activated by CFD to generate Ba and Bb chains; Bb chain constituting the catalytic component of the C3 and C5 convertases. Serine protease component of the complement C3 and C5 convertase complexes of the alternative complement pathway. Following cleavage and activation by factor D (CFD), forms the C3 convertase together with complement C3b. As part of the C3 convertase, cleaves and activates C3 into C3a anaphylatoxin and C3b opsonin, the next components of the complement pathways. When an additional complement C3b molecule binds to the C3 convertase, forms the C5 convertase, which cleaves and activates C5 into C5a anaphylatoxin and C5b component of the membrane attack complex. In terms of biological role, involved in proliferation and differentiation of preactivated B-lymphocytes, rapid spreading of peripheral blood monocytes, stimulation of lymphocyte blastogenesis and lysis of erythrocytes. The chain is Complement factor B from Homo sapiens (Human).